The chain runs to 906 residues: Protein translocase subunit SecA (906 aa).

ATP contacts are provided by residues Q87, 105 to 109 (GEGKT), and D512. The tract at residues 875-897 (VTFVRDEQKVGRNDPCPCGSGKK) is disordered. Zn(2+)-binding residues include C890, C892, C901, and H902.

It belongs to the SecA family. As to quaternary structure, monomer and homodimer. Part of the essential Sec protein translocation apparatus which comprises SecA, SecYEG and auxiliary proteins SecDF-YajC and YidC. Zn(2+) serves as cofactor.

The protein localises to the cell inner membrane. It localises to the cytoplasm. The enzyme catalyses ATP + H2O + cellular proteinSide 1 = ADP + phosphate + cellular proteinSide 2.. In terms of biological role, part of the Sec protein translocase complex. Interacts with the SecYEG preprotein conducting channel. Has a central role in coupling the hydrolysis of ATP to the transfer of proteins into and across the cell membrane, serving both as a receptor for the preprotein-SecB complex and as an ATP-driven molecular motor driving the stepwise translocation of polypeptide chains across the membrane. The polypeptide is Protein translocase subunit SecA (Aeromonas hydrophila subsp. hydrophila (strain ATCC 7966 / DSM 30187 / BCRC 13018 / CCUG 14551 / JCM 1027 / KCTC 2358 / NCIMB 9240 / NCTC 8049)).